The chain runs to 334 residues: Formamidase (334 aa).

The region spanning 14 to 260 is the CN hydrolase domain; the sequence is MLMGLVQYPV…WEIVTAEVFP (247 aa). E60 acts as the Proton acceptor in catalysis. Residue K133 is the Proton donor of the active site. C166 (nucleophile) is an active-site residue.

The protein belongs to the carbon-nitrogen hydrolase superfamily. Aliphatic amidase family.

The enzyme catalyses formamide + H2O = formate + NH4(+). In terms of biological role, is an aliphatic amidase with a restricted substrate specificity, as it only hydrolyzes formamide. The polypeptide is Formamidase (Nitratidesulfovibrio vulgaris (strain DP4) (Desulfovibrio vulgaris)).